The primary structure comprises 420 residues: Histidine--tRNA ligase (420 aa).

Belongs to the class-II aminoacyl-tRNA synthetase family. As to quaternary structure, homodimer.

The protein resides in the cytoplasm. It carries out the reaction tRNA(His) + L-histidine + ATP = L-histidyl-tRNA(His) + AMP + diphosphate + H(+). In Clostridioides difficile (strain 630) (Peptoclostridium difficile), this protein is Histidine--tRNA ligase.